We begin with the raw amino-acid sequence, 463 residues long: MDLTIRTIYKDPARYAGQEVILKGWIRNHRDQKEFGFINLNDGSFFENIQVVYERATTKDFDAVTRLSVGASIEVIGTLVLTPDRSQPFEIKALEVRLIGDSGENYPIQPKRHTREFLREVAHLRPRTNLFSAVFRVRSIAAYAIHKFFQEQDFVYVHTPILTANDGEGAGAMFKVTTLDMNKPPRNEDSSIDYSKDFFGREANLTVTGQLEGEAYAHAFRNIYTFGPTFRAENSNTTTHASEFWMIEPEIAFADLNDNMELIERMVKYVTSYVLEHAKEEMAFFDKFVEKGLLTKLDNLLKSSFKRITHEEAINILLKSNHKFENQPKHGEDLAKEHERYLTEKAFHGPVFVKDWPKDIKAFYMRLNDDQKTVAAVDLLVPGSGELVGGSQREERLDVLLKRMEDMHVPVKDLDWYLDLRRYGGVQTSGFGLGFERYLIYVTGVENIRDVIPFPRTPKNILF.

Belongs to the class-II aminoacyl-tRNA synthetase family. In terms of assembly, homodimer.

It localises to the cytoplasm. It carries out the reaction tRNA(Asn) + L-asparagine + ATP = L-asparaginyl-tRNA(Asn) + AMP + diphosphate + H(+). The polypeptide is Asparagine--tRNA ligase (Acholeplasma laidlawii (strain PG-8A)).